The chain runs to 439 residues: DNA damage-inducible protein 1 (439 aa).

The 82-residue stretch at 1–82 (MQITIAIQDT…LALHVRETQR (82 aa)) folds into the Ubiquitin-like domain. The segment at 82–101 (RATAVPESQQGRPAAPPQQD) is disordered. Asp220 is a catalytic residue. Residues 333 to 398 (QDEPTIEGPG…PAPRAPQARS (66 aa)) are disordered. 2 stretches are compositionally biased toward low complexity: residues 364-375 (GQAGPSTAAQPG) and 383-398 (PASA…QARS). The UBA domain occupies 398-438 (SFPREHIEQLVALGADEQKAIRALEATDGNVEYAASLIFEG).

It belongs to the DDI1 family. In terms of assembly, binds ubiquitin and polyubiquitinated proteins.

It is found in the cytoplasm. Functionally, probable aspartic protease. May be involved in the regulation of exocytosis. Acts as a linker between the 19S proteasome and polyubiquitinated proteins via UBA domain interactions with ubiquitin for their subsequent degradation. Required for S-phase checkpoint control. This is DNA damage-inducible protein 1 (ddi-1) from Neurospora crassa (strain ATCC 24698 / 74-OR23-1A / CBS 708.71 / DSM 1257 / FGSC 987).